The chain runs to 84 residues: Small ribosomal subunit protein uS17 (84 aa).

It belongs to the universal ribosomal protein uS17 family. As to quaternary structure, part of the 30S ribosomal subunit.

Its function is as follows. One of the primary rRNA binding proteins, it binds specifically to the 5'-end of 16S ribosomal RNA. This chain is Small ribosomal subunit protein uS17, found in Klebsiella pneumoniae subsp. pneumoniae (strain ATCC 700721 / MGH 78578).